A 611-amino-acid chain; its full sequence is Pyrichalasin H cluster regulator pyiR (611 aa).

Residues 11–47 (CDRCRGHKLRCIRLDPGPNDTGALLPCKRCVKAGAEC) constitute a DNA-binding region (zn(2)-C6 fungal-type). Disordered stretches follow at residues 53 to 128 (LSVK…LPPW), 169 to 192 (ALAA…DGTT), 265 to 291 (GGAG…GRSS), 401 to 427 (AHEG…AAPQ), 521 to 550 (RGGL…SDER), and 564 to 593 (SWFT…RTVE). The segment covering 59 to 69 (GDGHHSAHRAT) has biased composition (basic and acidic residues). Residues 98–109 (PTQPAPQRQTQR) are compositionally biased toward low complexity. Positions 265 to 279 (GGAGSQSLRDQQMQQ) are enriched in polar residues. Over residues 572–587 (GGSGGSGPGEGTGDSN) the composition is skewed to gly residues.

The protein localises to the nucleus. Its function is as follows. Transcription factor that specifically regulates the expression of the gene cluster that mediates the biosynthesis of the mycotoxin pyrichalasin H, a tyrosine-derived cytochalasan that inhibits the growth of rice seedlings, but also inhibits lymphocyte capping and actin polymerization and alters cell morphology. Pyrichalasin H is indicated as the responsible agent for the genus-specific pathogenicity of M.grisea toward crabgrass. The polypeptide is Pyrichalasin H cluster regulator pyiR (Pyricularia grisea (Crabgrass-specific blast fungus)).